Here is a 700-residue protein sequence, read N- to C-terminus: Myotubularin-related protein 11 (700 aa).

Positions 1-39 are disordered; it reads MWWGGRGQSFNIAPQKEEPEMGLSGPKSNPGNRMPEPSS. Positions 201-644 constitute a Myotubularin phosphatase domain; that stretch reads LETLEDWETE…PQIRFWKRCY (444 aa).

The protein belongs to the protein-tyrosine phosphatase family. Non-receptor class myotubularin subfamily.

The chain is Myotubularin-related protein 11 (Mtmr11) from Mus musculus (Mouse).